The following is a 247-amino-acid chain: MTIPLLEINSLSFSYKVNLPPVFNNLSLKIEQGELIGLLGENPAGKTTLFNLIRGGVSNYEGTLKRNFSGGELVSLPQVINLSGTLRNEEVLDLICCFNKLTKKQAWTDVNHKWNDNFFIRYDKIRRKRTYTVSYGEKRWLIISLMVTLCKNARLFLLDEPTVGIDIQYRMMLWELINKITADGKTVFFSTHIFDELTRDKIPFYMLSKNSINRYSDMSDFIQSNNETTQKRHLLKKLWEQETDTWI.

The 229-residue stretch at 6–234 (LEINSLSFSY…NNETTQKRHL (229 aa)) folds into the ABC transporter domain. 40 to 47 (GENPAGKT) is an ATP binding site.

It belongs to the ABC transporter superfamily.

Together with two further proteins McbE and McbG this protein causes immunity to the peptide antibiotic microcin B17, which inhibits DNA replication in enterobacteriaceae. Immunity is determined by two different mechanisms. McbE is involved in the production of extracellular MccB17 and, in a complex with mcbf it also serves as 'pump' for the export of active MccB17 from the cytoplasm to the periplasmic space. This chain is Protein McbF (mcbF), found in Escherichia coli.